A 422-amino-acid chain; its full sequence is 3-carboxy-cis,cis-muconate cycloisomerase (422 aa).

It belongs to the class-II fumarase/aspartase family. As to quaternary structure, homotetramer.

The protein localises to the cytoplasm. It catalyses the reaction 2-(carboxymethyl)-5-oxo-2,5-dihydro-2-furoate = 3-carboxy-cis,cis-muconate + H(+). Its pathway is aromatic compound metabolism; beta-ketoadipate pathway; 5-oxo-4,5-dihydro-2-furylacetate from 3-carboxy-cis,cis-muconate: step 1/2. In terms of biological role, catalyzes an anti cycloisomerization. This chain is 3-carboxy-cis,cis-muconate cycloisomerase (pcaB), found in Pseudomonas putida (Arthrobacter siderocapsulatus).